The following is a 73-amino-acid chain: UPF0435 protein lwe1727 (73 aa).

This sequence belongs to the UPF0435 family.

The protein is UPF0435 protein lwe1727 of Listeria welshimeri serovar 6b (strain ATCC 35897 / DSM 20650 / CCUG 15529 / CIP 8149 / NCTC 11857 / SLCC 5334 / V8).